Here is a 149-residue protein sequence, read N- to C-terminus: MQSLQVKILDERMRDQLPTYGTPGSAGLDLRACIDEAITIAPGQTVLVPTGLAIYVEDPRYAAFILPRSGLGHKHSIVLGNLVGLIDSDYQGQLMVSTWNRGSTTFKLEPMERLAQLVVMPVQQVELKVVEEFTESSRGAGGFGSTGRA.

Residues 68-70 (RSG), Asn-81, 85-87 (LID), and Met-95 each bind substrate.

It belongs to the dUTPase family. Mg(2+) is required as a cofactor.

It carries out the reaction dUTP + H2O = dUMP + diphosphate + H(+). It participates in pyrimidine metabolism; dUMP biosynthesis; dUMP from dCTP (dUTP route): step 2/2. This enzyme is involved in nucleotide metabolism: it produces dUMP, the immediate precursor of thymidine nucleotides and it decreases the intracellular concentration of dUTP so that uracil cannot be incorporated into DNA. The protein is Deoxyuridine 5'-triphosphate nucleotidohydrolase of Polynucleobacter necessarius subsp. necessarius (strain STIR1).